A 356-amino-acid polypeptide reads, in one-letter code: Holliday junction branch migration complex subunit RuvB (356 aa).

The segment at 4-192 is large ATPase domain (RuvB-L); it reads DDTTDATADE…FGFTAHMEFY (189 aa). ATP-binding positions include Leu31, Arg32, Gly73, Lys76, Thr77, Thr78, 139–141, Arg182, Tyr192, and Arg229; that span reads EDF. Thr77 lines the Mg(2+) pocket. Residues 193 to 263 form a small ATPAse domain (RuvB-S) region; that stretch reads EPHELERVIH…IAAAALKVYE (71 aa). The segment at 266-356 is head domain (RuvB-H); sequence ARGLDRLDRG…GNGQGDLFGA (91 aa). 3 residues coordinate DNA: Arg302, Arg321, and Arg326.

It belongs to the RuvB family. As to quaternary structure, homohexamer. Forms an RuvA(8)-RuvB(12)-Holliday junction (HJ) complex. HJ DNA is sandwiched between 2 RuvA tetramers; dsDNA enters through RuvA and exits via RuvB. An RuvB hexamer assembles on each DNA strand where it exits the tetramer. Each RuvB hexamer is contacted by two RuvA subunits (via domain III) on 2 adjacent RuvB subunits; this complex drives branch migration. In the full resolvosome a probable DNA-RuvA(4)-RuvB(12)-RuvC(2) complex forms which resolves the HJ.

The protein localises to the cytoplasm. It carries out the reaction ATP + H2O = ADP + phosphate + H(+). The RuvA-RuvB-RuvC complex processes Holliday junction (HJ) DNA during genetic recombination and DNA repair, while the RuvA-RuvB complex plays an important role in the rescue of blocked DNA replication forks via replication fork reversal (RFR). RuvA specifically binds to HJ cruciform DNA, conferring on it an open structure. The RuvB hexamer acts as an ATP-dependent pump, pulling dsDNA into and through the RuvAB complex. RuvB forms 2 homohexamers on either side of HJ DNA bound by 1 or 2 RuvA tetramers; 4 subunits per hexamer contact DNA at a time. Coordinated motions by a converter formed by DNA-disengaged RuvB subunits stimulates ATP hydrolysis and nucleotide exchange. Immobilization of the converter enables RuvB to convert the ATP-contained energy into a lever motion, pulling 2 nucleotides of DNA out of the RuvA tetramer per ATP hydrolyzed, thus driving DNA branch migration. The RuvB motors rotate together with the DNA substrate, which together with the progressing nucleotide cycle form the mechanistic basis for DNA recombination by continuous HJ branch migration. Branch migration allows RuvC to scan DNA until it finds its consensus sequence, where it cleaves and resolves cruciform DNA. The protein is Holliday junction branch migration complex subunit RuvB of Streptomyces avermitilis (strain ATCC 31267 / DSM 46492 / JCM 5070 / NBRC 14893 / NCIMB 12804 / NRRL 8165 / MA-4680).